The chain runs to 343 residues: Dihydroorotase (343 aa).

Zn(2+)-binding residues include histidine 14 and histidine 16. Substrate-binding positions include 16-18 (HLR) and asparagine 42. 3 residues coordinate Zn(2+): lysine 100, histidine 137, and histidine 175. At lysine 100 the chain carries N6-carboxylysine. Residue histidine 137 coordinates substrate. Leucine 220 contacts substrate. Residue aspartate 248 participates in Zn(2+) binding. Residue aspartate 248 is part of the active site. Substrate is bound by residues histidine 252 and alanine 264.

Belongs to the metallo-dependent hydrolases superfamily. DHOase family. Class II DHOase subfamily. As to quaternary structure, homodimer. Zn(2+) serves as cofactor.

The catalysed reaction is (S)-dihydroorotate + H2O = N-carbamoyl-L-aspartate + H(+). It participates in pyrimidine metabolism; UMP biosynthesis via de novo pathway; (S)-dihydroorotate from bicarbonate: step 3/3. In terms of biological role, catalyzes the reversible cyclization of carbamoyl aspartate to dihydroorotate. The protein is Dihydroorotase of Parasynechococcus marenigrum (strain WH8102).